A 158-amino-acid polypeptide reads, in one-letter code: Large ribosomal subunit protein uL30 (158 aa).

The protein belongs to the universal ribosomal protein uL30 family. As to quaternary structure, part of the 50S ribosomal subunit.

The polypeptide is Large ribosomal subunit protein uL30 (Saccharolobus islandicus (strain Y.G.57.14 / Yellowstone #1) (Sulfolobus islandicus)).